A 131-amino-acid chain; its full sequence is Large ribosomal subunit protein bL17 (131 aa).

The protein belongs to the bacterial ribosomal protein bL17 family. In terms of assembly, part of the 50S ribosomal subunit. Contacts protein L32.

The sequence is that of Large ribosomal subunit protein bL17 from Chromobacterium violaceum (strain ATCC 12472 / DSM 30191 / JCM 1249 / CCUG 213 / NBRC 12614 / NCIMB 9131 / NCTC 9757 / MK).